An 84-amino-acid polypeptide reads, in one-letter code: Small ribosomal subunit protein uS17 (84 aa).

Belongs to the universal ribosomal protein uS17 family. As to quaternary structure, part of the 30S ribosomal subunit.

Its function is as follows. One of the primary rRNA binding proteins, it binds specifically to the 5'-end of 16S ribosomal RNA. In Moorella thermoacetica (strain ATCC 39073 / JCM 9320), this protein is Small ribosomal subunit protein uS17.